The primary structure comprises 360 residues: Phosphoserine aminotransferase (360 aa).

An L-glutamate-binding site is contributed by R41. W101, T152, D172, and Q195 together coordinate pyridoxal 5'-phosphate. N6-(pyridoxal phosphate)lysine is present on K196. Residue 237-238 participates in pyridoxal 5'-phosphate binding; the sequence is NT.

It belongs to the class-V pyridoxal-phosphate-dependent aminotransferase family. SerC subfamily. In terms of assembly, homodimer. Pyridoxal 5'-phosphate serves as cofactor.

It localises to the cytoplasm. The enzyme catalyses O-phospho-L-serine + 2-oxoglutarate = 3-phosphooxypyruvate + L-glutamate. It catalyses the reaction 4-(phosphooxy)-L-threonine + 2-oxoglutarate = (R)-3-hydroxy-2-oxo-4-phosphooxybutanoate + L-glutamate. Its pathway is amino-acid biosynthesis; L-serine biosynthesis; L-serine from 3-phospho-D-glycerate: step 2/3. It functions in the pathway cofactor biosynthesis; pyridoxine 5'-phosphate biosynthesis; pyridoxine 5'-phosphate from D-erythrose 4-phosphate: step 3/5. In terms of biological role, catalyzes the reversible conversion of 3-phosphohydroxypyruvate to phosphoserine and of 3-hydroxy-2-oxo-4-phosphonooxybutanoate to phosphohydroxythreonine. The chain is Phosphoserine aminotransferase from Burkholderia multivorans (strain ATCC 17616 / 249).